The chain runs to 391 residues: MGWRACLRPEASGAVQGRWLGAVLSGLCLLSALAFLEWLGSPTETAWNAAQGNVDAPDVGGSTPQVPSLLSMLVTRRRRYTLTPARLRWDHFNLTYRILSFPRNLLSPEETRRGLAAAFRMWSDVSPFSFREVAPERPSDLKIGFYPVNHTDCLVSALHHCFDGPTGELAHAFFPPHGGIHFDDSEYWVLGPTRYSWKKGVWLTDLVHVAAHEIGHALGLMHSQQDQALMHLNATLRGWKALSQDELWGLHRLYGCLDRIFVCTSWARKGFCDVRQRLMKRLCPRSCDFCYEFPFPTVATTTSPTRTKTRFVREGRNMTFHCGQKILHKKGKVYWYKDQEPLEFSYPGYLALGEARLSIIANAVNEGTYTCVVRHRQRVLTTYSWRVRVRS.

The Cytoplasmic segment spans residues 1–19 (MGWRACLRPEASGAVQGRW). A propeptide spanning residues 1-79 (MGWRACLRPE…LSMLVTRRRR (79 aa)) is cleaved from the precursor. The helical; Signal-anchor for type II membrane protein transmembrane segment at 20 to 38 (LGAVLSGLCLLSALAFLEW) threads the bilayer. The Lumenal portion of the chain corresponds to 39–391 (LGSPTETAWN…TYSWRVRVRS (353 aa)). N-linked (GlcNAc...) asparagine glycosylation is found at N93 and N149. H212 lines the Zn(2+) pocket. The active site involves E213. 2 residues coordinate Zn(2+): H216 and H222. N233 is a glycosylation site (N-linked (GlcNAc...) asparagine). A ShKT domain is found at 256-290 (CLDRIFVCTSWARKGFCDVRQRLMKRLCPRSCDFC). 3 disulfides stabilise this stretch: C256–C290, C263–C283, and C272–C287. Positions 296 to 381 (PTVATTTSPT…VVRHRQRVLT (86 aa)) constitute an Ig-like C2-type domain. Residue N317 is glycosylated (N-linked (GlcNAc...) asparagine). Cysteines 322 and 371 form a disulfide.

Belongs to the peptidase M10A family. Requires Zn(2+) as cofactor. N-glycosylated. Post-translationally, proteolytic cleavage might yield an active form. In terms of tissue distribution, expressed at the highest levels in ovary and uterus. In ovary expression is strictly confined to granulosa cells of preantral and small antral follicles. Detected also in testis and prostate.

It is found in the membrane. The protein resides in the endoplasmic reticulum membrane. Inhibited by TIMP2. Functionally, protease. May regulate the surface expression of some potassium channels by retaining them in the endoplasmic reticulum. This Rattus norvegicus (Rat) protein is Matrix metalloproteinase-23 (Mmp23).